We begin with the raw amino-acid sequence, 291 residues long: Tyrosine-protein kinase PtkA (291 aa).

A disordered region spans residues 1–79; that stretch reads MSSPRERRPA…RRASSPGESP (79 aa). Residues 23–60 show a composition bias toward polar residues; the sequence is HQTSRSSPDTTAPTGSGLSNRFVNDNGIVTDTTASGTN. Y262 bears the Phosphotyrosine mark.

Belongs to the HAD-like hydrolase superfamily. CbbY/CbbZ/Gph/YieH family. Interacts with PtpA. In terms of processing, autophosphorylated.

It carries out the reaction L-tyrosyl-[protein] + ATP = O-phospho-L-tyrosyl-[protein] + ADP + H(+). Required for growth within macrophages. Catalyzes the phosphorylation of PtpA on the tyrosine residues at positions 128 and 129, thereby increasing PtpA phosphatase activity and promoting pathogenicity. This Mycobacterium bovis (strain ATCC BAA-935 / AF2122/97) protein is Tyrosine-protein kinase PtkA.